The primary structure comprises 324 residues: o-succinylbenzoate synthase (324 aa).

K135 acts as the Proton donor in catalysis. Mg(2+) contacts are provided by D163, E192, and D215. Residue K237 is the Proton acceptor of the active site.

It belongs to the mandelate racemase/muconate lactonizing enzyme family. MenC type 1 subfamily. The cofactor is a divalent metal cation.

It carries out the reaction (1R,6R)-6-hydroxy-2-succinyl-cyclohexa-2,4-diene-1-carboxylate = 2-succinylbenzoate + H2O. Its pathway is quinol/quinone metabolism; 1,4-dihydroxy-2-naphthoate biosynthesis; 1,4-dihydroxy-2-naphthoate from chorismate: step 4/7. It participates in quinol/quinone metabolism; menaquinone biosynthesis. Functionally, converts 2-succinyl-6-hydroxy-2,4-cyclohexadiene-1-carboxylate (SHCHC) to 2-succinylbenzoate (OSB). The protein is o-succinylbenzoate synthase of Aliivibrio fischeri (strain ATCC 700601 / ES114) (Vibrio fischeri).